The sequence spans 477 residues: Protein kinase C and casein kinase substrate in neurons protein 2 (477 aa).

Residues 11-282 (VEVSSDSFWE…AIKSADAMED (272 aa)) enclose the F-BAR domain. Residues 25-274 (KRTVKRIDDG…SIYRELEYAI (250 aa)) adopt a coiled-coil conformation. Composition is skewed to basic and acidic residues over residues 163-176 (CKEEKLATSRETNS) and 186-216 (QLKKLQDKVEKSKQDSQKTKEKYEKSLKDLD). Disordered regions lie at residues 163-218 (CKEE…LDGT) and 314-412 (RREK…PFDE). Low complexity predominate over residues 328–341 (GISQSGEQSSIQNQ). Residues 342–357 (HSSHLSVQSAQSTNNP) are compositionally biased toward polar residues. Positions 356–358 (NPF) match the NPF1 motif. Positions 370 to 388 (TENKKIENVGSYEKTHPAE) are enriched in basic and acidic residues. Residues 395 to 407 (NNPFNPSDTNGDN) are compositionally biased toward polar residues. The NPF2 motif lies at 396-398 (NPF). The NPF3 motif lies at 408 to 410 (NPF). The SH3 domain maps to 417-477 (TLEVRVRALY…YPANYVESVQ (61 aa)).

It belongs to the PACSIN family. As to quaternary structure, interacts with adam13 through the SH3 domains. Post-translationally, phosphorylated. As to expression, ubiquitously expressed with higher expression in the ectoderm, the neuroectoderm, and dorsal mesoderm layers.

The protein localises to the cytoplasm. It localises to the cytoskeleton. It is found in the cytoplasmic vesicle membrane. The protein resides in the cell projection. Its subcellular location is the ruffle membrane. The protein localises to the early endosome. It localises to the recycling endosome membrane. It is found in the cell membrane. The protein resides in the membrane. Its subcellular location is the caveola. The protein localises to the cell junction. It localises to the adherens junction. Functionally, regulates the morphogenesis and endocytosis of caveolae. Lipid-binding protein that is able to promote the tubulation of the phosphatidic acid-containing membranes it preferentially binds. Plays a role in intracellular vesicle-mediated transport. Involved in the endocytosis of cell-surface receptors like the EGF receptor, contributing to its internalization in the absence of EGF stimulus. The protein is Protein kinase C and casein kinase substrate in neurons protein 2 (pacsin2) of Xenopus laevis (African clawed frog).